The chain runs to 242 residues: ATP-dependent dethiobiotin synthetase BioD (242 aa).

12-17 (EVGKTV) contributes to the ATP binding site. Position 16 (T16) interacts with Mg(2+). K37 is a catalytic residue. S41 contributes to the substrate binding site. Residues D51 and 112 to 115 (EGAG) each bind ATP. 2 residues coordinate Mg(2+): D51 and E112.

It belongs to the dethiobiotin synthetase family. In terms of assembly, homodimer. Mg(2+) serves as cofactor.

Its subcellular location is the cytoplasm. It carries out the reaction (7R,8S)-7,8-diammoniononanoate + CO2 + ATP = (4R,5S)-dethiobiotin + ADP + phosphate + 3 H(+). It participates in cofactor biosynthesis; biotin biosynthesis; biotin from 7,8-diaminononanoate: step 1/2. Its function is as follows. Catalyzes a mechanistically unusual reaction, the ATP-dependent insertion of CO2 between the N7 and N8 nitrogen atoms of 7,8-diaminopelargonic acid (DAPA, also called 7,8-diammoniononanoate) to form a ureido ring. This chain is ATP-dependent dethiobiotin synthetase BioD, found in Bacillus cereus (strain B4264).